The primary structure comprises 233 residues: MKMKLVTAAIMGLAMSTAMAATDATSLTTDKDKLSYSIGADLGKNFKNQGIDINPDVLAKGMQDGMSGAQLILTEEQMKDVLSKFQKDLMAKRSAEFNKKAEENKAKGDAFLSANKSKPGIVVLPSGLQYKIIDAGTGAKPGKSDTVTVEYTGTLIDGTVFDSTEKAGKPATFQVSQVIPGWTEALQLMPAGSTWEVFVPADLAYGPRSVGGPIGPNETLIFKIHLISVKKAA.

Residues 1–20 (MKMKLVTAAIMGLAMSTAMA) form the signal peptide. The PPIase FKBP-type domain occupies 144–233 (SDTVTVEYTG…IHLISVKKAA (90 aa)).

This sequence belongs to the FKBP-type PPIase family.

The protein localises to the cell outer membrane. The enzyme catalyses [protein]-peptidylproline (omega=180) = [protein]-peptidylproline (omega=0). Its activity is regulated as follows. Strongly inhibited by FK506 but is completely resistant to cyclosporin A. Essential virulence factor associated with macrophage infectivity. Exhibits PPIase activity. This Legionella longbeachae protein is Outer membrane protein MIP (mip).